Here is a 236-residue protein sequence, read N- to C-terminus: Orotidine 5'-phosphate decarboxylase (236 aa).

Residues Asp14, Lys36, 63–72 (DLKYHDIPNT), Thr122, Arg183, Gln192, Gly212, and Arg213 each bind substrate. Lys65 functions as the Proton donor in the catalytic mechanism.

The protein belongs to the OMP decarboxylase family. Type 1 subfamily. In terms of assembly, homodimer.

The enzyme catalyses orotidine 5'-phosphate + H(+) = UMP + CO2. Its pathway is pyrimidine metabolism; UMP biosynthesis via de novo pathway; UMP from orotate: step 2/2. In terms of biological role, catalyzes the decarboxylation of orotidine 5'-monophosphate (OMP) to uridine 5'-monophosphate (UMP). In Halorhodospira halophila (strain DSM 244 / SL1) (Ectothiorhodospira halophila (strain DSM 244 / SL1)), this protein is Orotidine 5'-phosphate decarboxylase.